Reading from the N-terminus, the 910-residue chain is MGTPKAQHPPPSQLLLLILLSCAWIEGLPLKEDEMMPEPGSETPTVASEDLAELLHGALLRKGPEIGFLPGSDPDPTLATPPAGQTLAAPSLPRATEPGTGPLTTAVTPKGVRGAGPTAPELLTPPPGTTAPPPPGPASPVPPLRPEGGEEETTTTIITTTTVTTTVTSPVLCNNNISEGEGFVESPDLGSTASRSVELLDCTYSIHVYPGYGIEIQVQTLNLSQEEELLVLAGGGSPGLAPRLLANSSMLGEGQVLRSPTNRLLLHFQSPRVPRGNGFRIHYQAYLLSCGFPPRPAHGDVSVTDLHPGGTATFHCDSGYQLQGEETLICLNGTRPAWTGEPPSCTASCGGTIHNATLGRIVSPEPGGAAGPNLTCRWVIEAAEGRRLHLHFERVSLDEDNDRLMVRSGGSPLSPVIYDSDMDDVPERGLISDAQSLYVELLSETPANPLLLSLRFEAFEEDRCFPPFLAHGNVTTTDPEFHPGALATFSCLPGYALEPPGPPNAIECVDPTEPHWNDTEPACKAMCGGELSEPAGVVLSPDWPQSYSPGQDCVWGLHVQEEKRILLQVEILNVREGDMLTLFDGDGPSARVLAQLRGPQPRRRLLSSGPDLTLQFQAPPGPPNPGLGQGFVLHFKEVPRNDTCPELPPPEWGWRTASHGDLIRGTVLTYQCEPGYELLGSDILTCQWDLSWSAAPPACQKIMTCADPGEITNGHRTASDAGFPVGSHVQYRCLPGYSLEGAAVLTCYSRDTGTPKWSDRVPKCALKYEPCLNPGVPENGYQTLYKHHYQAGESLRFFCYEGFELIGEVTITCVPGHPSQWTSQPPLCKVTQTTDPSRQLEGGNLALAILLPLGLVIVLGIGVYIYYTKLQGKSLFGFSGSHSYSPITVESDFSNPLYEAGDTREYEVSI.

The signal sequence occupies residues 1–27 (MGTPKAQHPPPSQLLLLILLSCAWIEG). Residues 28-844 (LPLKEDEMMP…DPSRQLEGGN (817 aa)) are Extracellular-facing. The interval 70–152 (PGSDPDPTLA…PLRPEGGEEE (83 aa)) is disordered. The segment covering 123 to 145 (LTPPPGTTAPPPPGPASPVPPLR) has biased composition (pro residues). C173 and C202 are oxidised to a cystine. In terms of domain architecture, CUB 1 spans 173 to 286 (CNNNISEGEG…NGFRIHYQAY (114 aa)). N222 carries an N-linked (GlcNAc...) asparagine glycan. Positions 288-347 (LSCGFPPRPAHGDVSVTDLHPGGTATFHCDSGYQLQGEETLICLNGTRPAWTGEPPSCTA) constitute a Sushi 1 domain. 12 disulfide bridges follow: C290–C330, C316–C345, C349–C376, C464–C508, C491–C523, C527–C553, C644–C686, C672–C699, C705–C747, C733–C764, C771–C813, and C799–C828. N332, N373, N473, and N517 each carry an N-linked (GlcNAc...) asparagine glycan. A CUB 2 domain is found at 349–459 (CGGTIHNATL…LLLSLRFEAF (111 aa)). The region spanning 462–525 (DRCFPPFLAH…WNDTEPACKA (64 aa)) is the Sushi 2 domain. In terms of domain architecture, CUB 3 spans 527-638 (CGGELSEPAG…QGFVLHFKEV (112 aa)). Sushi domains are found at residues 642 to 701 (DTCP…ACQK), 703 to 766 (MTCA…KCAL), and 769 to 830 (EPCL…LCKV). A helical membrane pass occupies residues 845–865 (LALAILLPLGLVIVLGIGVYI). The Cytoplasmic segment spans residues 866–910 (YYTKLQGKSLFGFSGSHSYSPITVESDFSNPLYEAGDTREYEVSI).

It belongs to the SEZ6 family. As to expression, expressed exclusively in the brain, predominantly in the neurons. Wide expression in the gray matter of the brain with high levels in the olfactory bulb, anterior olfactory nuclei, hippocampal formation and cerebellar cortex. Detected diffusely and weakly in the white matter, such as the corpus callosum and cerebellar medulla. In the cerebellar cortex, intensely expressed in Purkinje cells (PC) and granule cells. Detected also in interneurons in the molecular layer. Up-regulated at two weeks after birth.

It is found in the cell membrane. The protein resides in the endoplasmic reticulum membrane. May contribute to specialized endoplasmic reticulum functions in neurons. The protein is Seizure 6-like protein 2 (Sez6l2) of Mus musculus (Mouse).